The sequence spans 542 residues: Phosphoacetylglucosamine mutase (542 aa).

At methionine 1 the chain carries N-acetylmethionine. Threonine 62 is modified (phosphothreonine). The Phosphoserine intermediate role is filled by serine 64. Mg(2+)-binding residues include serine 64, aspartate 276, aspartate 278, and aspartate 280. Serine 64 is subject to Phosphoserine. Substrate-binding positions include 370 to 372 (EAN), 496 to 500 (RPSGT), and arginine 505.

This sequence belongs to the phosphohexose mutase family. Mg(2+) is required as a cofactor.

The enzyme catalyses N-acetyl-alpha-D-glucosamine 1-phosphate = N-acetyl-D-glucosamine 6-phosphate. It participates in nucleotide-sugar biosynthesis; UDP-N-acetyl-alpha-D-glucosamine biosynthesis; N-acetyl-alpha-D-glucosamine 1-phosphate from alpha-D-glucosamine 6-phosphate (route I): step 2/2. Inhibited by Mn(2+), Cd(2+), Zn(2+), Cu(2+) and Be(2+). Catalyzes the conversion of GlcNAc-6-P into GlcNAc-1-P during the synthesis of uridine diphosphate/UDP-GlcNAc, a sugar nucleotide critical to multiple glycosylation pathways including protein N- and O-glycosylation. The chain is Phosphoacetylglucosamine mutase from Sus scrofa (Pig).